Here is a 127-residue protein sequence, read N- to C-terminus: MLPSSTPGPGHATETCPAPPGPERSPAARAPAAASSLGPVSTAGRAPRGLDMSAQEPPQGRRFPIEAGDSRGLAAAPESQDSPEAVATEHNPVRPLRRCPGCHCLTLLHVPIDVYLAMGGSPRARAT.

A disordered region spans residues 1–96 (MLPSSTPGPG…ATEHNPVRPL (96 aa)). Residues 24-39 (RSPAARAPAAASSLGP) are compositionally biased toward low complexity.

Belongs to the FAM229 family.

This chain is Protein FAM229A (FAM229A), found in Homo sapiens (Human).